The primary structure comprises 884 residues: Receptor-like protein 39 (884 aa).

The signal sequence occupies residues 1–24; sequence MSELLFRLNFLLLLLLSCVSLASS. The Extracellular segment spans residues 25 to 847; it reads FFSFNDPVVG…EEEEQVLNWK (823 aa). Residues N59, N71, and N92 are each glycosylated (N-linked (GlcNAc...) asparagine). LRR repeat units lie at residues 98 to 122, 124 to 146, 147 to 170, 171 to 196, 197 to 223, 225 to 245, 246 to 268, 269 to 292, 294 to 318, and 320 to 344; these read FHQL…EFGM, NKLE…SFSN, LSML…VRNL, RKLT…LFEL, HNLA…NLNK, ELLD…ISNL, TQLT…VQNL, TKLS…LFTM, FLSY…SLSS, and LENL…LINL. N-linked (GlcNAc...) asparagine glycosylation occurs at N146. 4 N-linked (GlcNAc...) asparagine glycosylation sites follow: N190, N208, N244, and N267. N304 and N313 each carry an N-linked (GlcNAc...) asparagine glycan. An LRR 11; degenerate repeat occupies 345-365; the sequence is KELHLSFLNTSYPINLKLFSS. N-linked (GlcNAc...) asparagine glycosylation is present at N353. LRR repeat units lie at residues 366-391, 392-413, 414-438, 440-463, and 464-487; these read LKYL…SYIP, STLE…ILKT, LPNL…LWSL, RLSS…ILVN, and SSVR…PLSV. N403 carries N-linked (GlcNAc...) asparagine glycosylation. The N-linked (GlcNAc...) asparagine glycan is linked to N463. One copy of the LRR 17; degenerate repeat lies at 488–507; sequence NYFSARNNRYGGDIPLSICS. LRR repeat units follow at residues 508–529, 530–553, 554–577, 579–601, 602–625, 628–652, 702–725, 726–749, 750–773, and 775–798; these read RRSL…PPCP, SNFL…YYAD, APLR…LLNC, ALQF…LKAL, PKLQ…NQGS, FPEL…FFEN, SSSA…IGLL, KALI…LANL, KKIE…IGTL, and FLAY…QITG. N520 is a glycosylation site (N-linked (GlcNAc...) asparagine). N576 carries an N-linked (GlcNAc...) asparagine glycan. Residue N732 is glycosylated (N-linked (GlcNAc...) asparagine). N780 is a glycosylation site (N-linked (GlcNAc...) asparagine). Residues 848-868 form a helical membrane-spanning segment; that stretch reads GVGIGYGVGVLLGLAIAQLIA. Residues 869–884 lie on the Cytoplasmic side of the membrane; the sequence is SYKPEWLVFLFQSRNH.

Belongs to the RLP family.

The protein localises to the cell membrane. This is Receptor-like protein 39 from Arabidopsis thaliana (Mouse-ear cress).